The primary structure comprises 256 residues: NAD(P)H-hydrate epimerase (256 aa).

A compositionally biased stretch (basic and acidic residues) spans 1-18 (MADPRRDPAAESKDRPST). Positions 1-21 (MADPRRDPAAESKDRPSTERV) are disordered. In terms of domain architecture, YjeF N-terminal spans 23-229 (AYTADAVRAA…DLGLEPYLRR (207 aa)). 74 to 78 (DNGGD) is a binding site for (6S)-NADPHX. Residues Asn75 and Asp135 each coordinate K(+). Residues 139–147 (GIGRLADRR) and Asp172 each bind (6S)-NADPHX. Ser175 is a binding site for K(+).

This sequence belongs to the NnrE/AIBP family. It depends on K(+) as a cofactor.

It catalyses the reaction (6R)-NADHX = (6S)-NADHX. The catalysed reaction is (6R)-NADPHX = (6S)-NADPHX. Catalyzes the epimerization of the S- and R-forms of NAD(P)HX, a damaged form of NAD(P)H that is a result of enzymatic or heat-dependent hydration. This is a prerequisite for the S-specific NAD(P)H-hydrate dehydratase to allow the repair of both epimers of NAD(P)HX. The protein is NAD(P)H-hydrate epimerase of Microbacterium testaceum (strain StLB037).